Reading from the N-terminus, the 156-residue chain is ATP synthase subunit b (156 aa).

The helical transmembrane segment at 7–27 (LFVQAIVFAILVWFTMKFVWP) threads the bilayer.

This sequence belongs to the ATPase B chain family. As to quaternary structure, F-type ATPases have 2 components, F(1) - the catalytic core - and F(0) - the membrane proton channel. F(1) has five subunits: alpha(3), beta(3), gamma(1), delta(1), epsilon(1). F(0) has three main subunits: a(1), b(2) and c(10-14). The alpha and beta chains form an alternating ring which encloses part of the gamma chain. F(1) is attached to F(0) by a central stalk formed by the gamma and epsilon chains, while a peripheral stalk is formed by the delta and b chains.

Its subcellular location is the cell inner membrane. Functionally, f(1)F(0) ATP synthase produces ATP from ADP in the presence of a proton or sodium gradient. F-type ATPases consist of two structural domains, F(1) containing the extramembraneous catalytic core and F(0) containing the membrane proton channel, linked together by a central stalk and a peripheral stalk. During catalysis, ATP synthesis in the catalytic domain of F(1) is coupled via a rotary mechanism of the central stalk subunits to proton translocation. Component of the F(0) channel, it forms part of the peripheral stalk, linking F(1) to F(0). The sequence is that of ATP synthase subunit b from Polaromonas sp. (strain JS666 / ATCC BAA-500).